Consider the following 258-residue polypeptide: UDP-2,3-diacylglucosamine hydrolase (258 aa).

Mn(2+) contacts are provided by Asp15, His17, Asp48, Asn88, and His123. A substrate-binding site is contributed by 88-89 (NR). Substrate-binding residues include Asp131, Ser169, Asn173, Lys176, and His204. The Mn(2+) site is built by His204 and His206.

This sequence belongs to the LpxH family. Mn(2+) serves as cofactor.

The protein resides in the cell inner membrane. It catalyses the reaction UDP-2-N,3-O-bis[(3R)-3-hydroxytetradecanoyl]-alpha-D-glucosamine + H2O = 2-N,3-O-bis[(3R)-3-hydroxytetradecanoyl]-alpha-D-glucosaminyl 1-phosphate + UMP + 2 H(+). The protein operates within glycolipid biosynthesis; lipid IV(A) biosynthesis; lipid IV(A) from (3R)-3-hydroxytetradecanoyl-[acyl-carrier-protein] and UDP-N-acetyl-alpha-D-glucosamine: step 4/6. Functionally, hydrolyzes the pyrophosphate bond of UDP-2,3-diacylglucosamine to yield 2,3-diacylglucosamine 1-phosphate (lipid X) and UMP by catalyzing the attack of water at the alpha-P atom. Involved in the biosynthesis of lipid A, a phosphorylated glycolipid that anchors the lipopolysaccharide to the outer membrane of the cell. In Bordetella bronchiseptica (strain ATCC BAA-588 / NCTC 13252 / RB50) (Alcaligenes bronchisepticus), this protein is UDP-2,3-diacylglucosamine hydrolase.